A 382-amino-acid chain; its full sequence is Dual-specificity RNA methyltransferase RlmN (382 aa).

The Proton acceptor role is filled by Glu95. The Radical SAM core domain maps to 101-349; the sequence is EETRGTLCVS…TTVRKTRGDD (249 aa). A disulfide bridge links Cys108 with Cys354. The [4Fe-4S] cluster site is built by Cys115, Cys119, and Cys122. S-adenosyl-L-methionine is bound by residues 180 to 181, Ser212, 234 to 236, and Asn311; these read GE and SLH. The active-site S-methylcysteine intermediate is the Cys354.

The protein belongs to the radical SAM superfamily. RlmN family. The cofactor is [4Fe-4S] cluster.

The protein resides in the cytoplasm. It catalyses the reaction adenosine(2503) in 23S rRNA + 2 reduced [2Fe-2S]-[ferredoxin] + 2 S-adenosyl-L-methionine = 2-methyladenosine(2503) in 23S rRNA + 5'-deoxyadenosine + L-methionine + 2 oxidized [2Fe-2S]-[ferredoxin] + S-adenosyl-L-homocysteine. The catalysed reaction is adenosine(37) in tRNA + 2 reduced [2Fe-2S]-[ferredoxin] + 2 S-adenosyl-L-methionine = 2-methyladenosine(37) in tRNA + 5'-deoxyadenosine + L-methionine + 2 oxidized [2Fe-2S]-[ferredoxin] + S-adenosyl-L-homocysteine. Its function is as follows. Specifically methylates position 2 of adenine 2503 in 23S rRNA and position 2 of adenine 37 in tRNAs. m2A2503 modification seems to play a crucial role in the proofreading step occurring at the peptidyl transferase center and thus would serve to optimize ribosomal fidelity. This is Dual-specificity RNA methyltransferase RlmN from Paraburkholderia phymatum (strain DSM 17167 / CIP 108236 / LMG 21445 / STM815) (Burkholderia phymatum).